The sequence spans 722 residues: Dual specificity tyrosine-phosphorylation-regulated kinase 2 (722 aa).

Position 25 is a phosphoserine (serine 25). The segment at 54–127 is disordered; the sequence is TTTSLNGNGN…SGELKCNTPM (74 aa). Residues 66-119 show a composition bias toward low complexity; it reads GNSNSNNNNNIGSPVSSSTTNSSNGGNERGSSTKSNSSSGSGSSGNSASSTGSG. A Protein kinase domain is found at 198–494; it reads YEILEVIGKG…PDEAAHHEFL (297 aa). Residues 204–212 and lysine 227 contribute to the ATP site; that span reads IGKGSFGQV. The active-site Proton acceptor is the aspartate 324. Phosphotyrosine; by autocatalysis is present on residues tyrosine 356 and tyrosine 358. 4 disordered regions span residues 494-519, 557-582, 624-643, and 679-722; these read LQPSASSRHRSCRMSSSSSSSGLNSV, TTKSRQQPPSQSHGHAQSNGHLPDIK, GSGSTHHVSSAATRKHLPGT, and TTTH…FGRA. Over residues 506-519 the composition is skewed to low complexity; the sequence is RMSSSSSSSGLNSV. Residues 557 to 576 are compositionally biased toward polar residues; that stretch reads TTKSRQQPPSQSHGHAQSNG. Low complexity-rich tracts occupy residues 626–635 and 689–707; these read GSTHHVSSAA and GQQQQQSSSGASTMAMSHS.

The protein belongs to the protein kinase superfamily. CMGC Ser/Thr protein kinase family. MNB/DYRK subfamily. The cofactor is Mg(2+). In terms of processing, phosphorylated on serine/threonine residues.

Its subcellular location is the cytoplasm. It catalyses the reaction L-seryl-[protein] + ATP = O-phospho-L-seryl-[protein] + ADP + H(+). The catalysed reaction is L-threonyl-[protein] + ATP = O-phospho-L-threonyl-[protein] + ADP + H(+). It carries out the reaction L-tyrosyl-[protein] + ATP = O-phospho-L-tyrosyl-[protein] + ADP + H(+). With respect to regulation, autophosphorylates on Tyr-356 and Tyr-358. Its function is as follows. In vitro; can phosphorylate exogenous substrates on Ser and Thr residues. May have a physiological role in development being involved in cellular growth and differentiation. This is Dual specificity tyrosine-phosphorylation-regulated kinase 2 from Drosophila melanogaster (Fruit fly).